We begin with the raw amino-acid sequence, 546 residues long: Interleukin-20 receptor subunit alpha (546 aa).

The signal sequence occupies residues 1 to 32 (MHTPGTPAPGHPDPPPLLLLTLLLLLAASGRA). The Extracellular segment spans residues 33-253 (VPCVFCGLPK…EVQTSAWKAK (221 aa)). 2 consecutive Fibronectin type-III domains span residues 42–138 (KPTN…FLET) and 139–245 (QVSP…TLEV). Residues asparagine 45, asparagine 86, asparagine 94, asparagine 185, and asparagine 203 are each glycosylated (N-linked (GlcNAc...) asparagine). Cysteine 90 and cysteine 98 are joined by a disulfide. Residues cysteine 218 and cysteine 239 are joined by a disulfide bond. The chain crosses the membrane as a helical span at residues 254–274 (VIFWYVFLTSVIVFLFSAIGY). The Cytoplasmic segment spans residues 275–546 (LVYRYIHVGK…EWGLHVQMES (272 aa)).

It belongs to the type II cytokine receptor family. Heterodimer with IL20RB and heterodimer with IL10RB.

The protein resides in the membrane. The IL20RA/IL20RB dimer is a receptor for IL19, IL20 and IL24. The IL20RA/IL10RB dimer is a receptor for IL26. The sequence is that of Interleukin-20 receptor subunit alpha (Il20ra) from Mus musculus (Mouse).